The primary structure comprises 44 residues: uncharacterized protein (44 aa).

The signal sequence occupies residues Met-1–Ala-16.

This is an uncharacterized protein from Helicobacter pylori (strain ATCC 700392 / 26695) (Campylobacter pylori).